Here is a 197-residue protein sequence, read N- to C-terminus: Large ribosomal subunit protein uL10 (197 aa).

The disordered stretch occupies residues 162 to 197; that stretch reads READGETAETPAQETASDDSKSTKAEASDASTTENK. Positions 179–188 are enriched in basic and acidic residues; that stretch reads DDSKSTKAEA.

This sequence belongs to the universal ribosomal protein uL10 family. Part of the ribosomal stalk of the 50S ribosomal subunit. The N-terminus interacts with L11 and the large rRNA to form the base of the stalk. The C-terminus forms an elongated spine to which L12 dimers bind in a sequential fashion forming a multimeric L10(L12)X complex.

Functionally, forms part of the ribosomal stalk, playing a central role in the interaction of the ribosome with GTP-bound translation factors. This Oenococcus oeni (strain ATCC BAA-331 / PSU-1) protein is Large ribosomal subunit protein uL10.